Reading from the N-terminus, the 272-residue chain is Protein UL24 homolog (272 aa).

The protein belongs to the herpesviridae UL24 family.

Its subcellular location is the virion. The protein localises to the host cytoplasm. It localises to the host nucleus. It is found in the host nucleolus. The protein resides in the host Golgi apparatus. Functionally, may participate in nuclear egress of viral particles. Plays a role in the dispersal of several host nucleolar proteins including NCL/nucleolin and NPM1. Since deletion of host NCL/nucleolin negatively impact on nuclear egress, UL24 supposedly acts on this process through its effect on host nucleoli. In Equine herpesvirus 1 (strain V592) (EHV-1), this protein is Protein UL24 homolog.